Reading from the N-terminus, the 290-residue chain is Glutamyl-Q tRNA(Asp) synthetase (290 aa).

Residues 9–13 (RFAPS) and E45 contribute to the L-glutamate site. The 'HIGH' region signature appears at 12–22 (PSPSGSLHFGS). C101, C103, Y115, and C119 together coordinate Zn(2+). Residues Y170 and R188 each coordinate L-glutamate. The 'KMSKS' region motif lies at 226 to 230 (KLSKQ). Residue K229 participates in ATP binding.

Belongs to the class-I aminoacyl-tRNA synthetase family. GluQ subfamily. Zn(2+) serves as cofactor.

Functionally, catalyzes the tRNA-independent activation of glutamate in presence of ATP and the subsequent transfer of glutamate onto a tRNA(Asp). Glutamate is transferred on the 2-amino-5-(4,5-dihydroxy-2-cyclopenten-1-yl) moiety of the queuosine in the wobble position of the QUC anticodon. The sequence is that of Glutamyl-Q tRNA(Asp) synthetase from Shewanella amazonensis (strain ATCC BAA-1098 / SB2B).